The following is a 69-amino-acid chain: Lantibiotic lichenicidin A2 (69 aa).

Positions 1 to 37 (MKNSAAREAFKGANHPAGMVSEEELKALVGGNDVNPE) are excised as a propeptide. 2-oxobutanoic acid is present on T38. 3 positions are modified to (Z)-2,3-didehydrobutyrine: T39, T42, and T43. Positions 44-48 (SSWTC) form a cross-link, lanthionine (Ser-Cys). A 2,3-didehydroalanine (Ser) modification is found at S45. 2 positions are modified to (Z)-2,3-didehydrobutyrine: T50 and T54. A cross-link (lanthionine (Ser-Cys)) is located at residues 56–60 (SASLC). 2 cross-links (beta-methyllanthionine (Thr-Cys)) span residues 62-65 (TTKC) and 66-69 (TSRC). T63 bears the (Z)-2,3-didehydrobutyrine mark.

In terms of processing, maturation of lantibiotics involves the enzymatic conversion of Thr, and Ser into dehydrated AA and the formation of thioether bonds with cysteine. This is followed by membrane translocation and cleavage of the modified precursor.

The protein localises to the secreted. The protein resides in the cell wall. Functionally, lanthionine-containing peptide antibiotic (lantibiotic) active on Gram-positive bacteria. The bactericidal activity of lantibiotics is based on depolarization of energized bacterial cytoplasmic membranes, initiated by the formation of aqueous transmembrane pores. When present individually, LchA2 exhibits activity towards L.lactis HP. When combined with LchA1, it displays activity towards a broad spectrum of non-pathogenic and pathogenic Gram-positive bacteria including strains of L.monocytogenes, methicillin-resistant S.aureus, S.pneumoniae and strains of vancomycin-resistant enterococci, but not towards E.faecium L4001 and BM4147-1. Combined LchA1 and LchA2 peptides also inhibit Bacillus sp. HIL-Y85/54728, L.lactis DPC3417 and B.halodurans C-125, which produce lantibiotics themselves. Inactivated by proteinase K and pronase E, but not by trypsin and chymotrypsin. This Bacillus licheniformis (strain ATCC 14580 / DSM 13 / JCM 2505 / CCUG 7422 / NBRC 12200 / NCIMB 9375 / NCTC 10341 / NRRL NRS-1264 / Gibson 46) protein is Lantibiotic lichenicidin A2.